Here is a 179-residue protein sequence, read N- to C-terminus: Inner membrane-spanning protein YciB (179 aa).

5 helical membrane passes run 22–42, 50–70, 76–96, 121–141, and 149–169; these read IYAA…YSWV, MALI…FFHN, WKVT…QWVM, LAWA…AFWL, and FKVF…GIYI.

This sequence belongs to the YciB family.

The protein localises to the cell inner membrane. In terms of biological role, plays a role in cell envelope biogenesis, maintenance of cell envelope integrity and membrane homeostasis. This is Inner membrane-spanning protein YciB from Escherichia coli O127:H6 (strain E2348/69 / EPEC).